A 245-amino-acid chain; its full sequence is MTFELKYTDRSYLPDQFKAISGNPPVEWKVTNNLVEYPEALRYMQERVENILAQNAHEQVWLLEHPSLYTAGTSAKKKDLLTPHLFPVYEAGRGGEFTYHGPGQRIAYIMLDLKRRRQDIRAFISALEEWIIQMLAKFNIKGERREDRVGVWVQRHSCQSTQNSLYSEDKIAAIGIRVRKWVSFHGVSINVDPNLAHYSGIVPCGITNHGVTSFLDLGLPTKMHDIDIALKQSFEQIFGPIIDIS.

Positions 54–242 constitute a BPL/LPL catalytic domain; the sequence is QNAHEQVWLL…SFEQIFGPII (189 aa). Substrate-binding positions include 93–100, 173–175, and 186–188; these read RGGEFTYH, AIG, and GVS. Residue C204 is the Acyl-thioester intermediate of the active site.

This sequence belongs to the LipB family.

The protein resides in the cytoplasm. The enzyme catalyses octanoyl-[ACP] + L-lysyl-[protein] = N(6)-octanoyl-L-lysyl-[protein] + holo-[ACP] + H(+). It functions in the pathway protein modification; protein lipoylation via endogenous pathway; protein N(6)-(lipoyl)lysine from octanoyl-[acyl-carrier-protein]: step 1/2. Catalyzes the transfer of endogenously produced octanoic acid from octanoyl-acyl-carrier-protein onto the lipoyl domains of lipoate-dependent enzymes. Lipoyl-ACP can also act as a substrate although octanoyl-ACP is likely to be the physiological substrate. This chain is Octanoyltransferase, found in Bartonella henselae (strain ATCC 49882 / DSM 28221 / CCUG 30454 / Houston 1) (Rochalimaea henselae).